We begin with the raw amino-acid sequence, 306 residues long: Porphobilinogen deaminase (306 aa).

Cysteine 244 carries the S-(dipyrrolylmethanemethyl)cysteine modification.

Belongs to the HMBS family. Monomer. Dipyrromethane is required as a cofactor.

It carries out the reaction 4 porphobilinogen + H2O = hydroxymethylbilane + 4 NH4(+). The protein operates within porphyrin-containing compound metabolism; protoporphyrin-IX biosynthesis; coproporphyrinogen-III from 5-aminolevulinate: step 2/4. In terms of biological role, tetrapolymerization of the monopyrrole PBG into the hydroxymethylbilane pre-uroporphyrinogen in several discrete steps. The chain is Porphobilinogen deaminase from Streptococcus sanguinis (strain SK36).